A 399-amino-acid polypeptide reads, in one-letter code: Serine/threonine-protein kinase PknL (399 aa).

Residues 1–368 are Cytoplasmic-facing; the sequence is MVEAGTRDPL…FIWARQHARR (368 aa). Positions 19-278 constitute a Protein kinase domain; sequence YLVQAKIASG…IAMGADLEAI (260 aa). ATP-binding positions include 25–33 and Lys-48; that span reads IASGGTSTV. Residue Thr-32 is modified to Phosphothreonine; by autocatalysis. The residue at position 62 (Thr-62) is a Phosphothreonine; by autocatalysis. Catalysis depends on Asp-142, which acts as the Proton acceptor. A phosphothreonine; by autocatalysis mark is found at Thr-173, Thr-175, and Thr-323. The interval 312–346 is disordered; that stretch reads GQLGAKPVHHPTRQLTRQPGDCSEPASGSEPEHEP. The chain crosses the membrane as a helical span at residues 369–389; it reads MVLVWVSVVLAITGLVASAAW. The Extracellular portion of the chain corresponds to 390–399; it reads TIGSNLSGLL.

It belongs to the protein kinase superfamily. Ser/Thr protein kinase family. Autophosphorylated. Thr-173 is required for autophosphorylation and transphosphorylation activities. Thr-175 is not necessary for autophosphorylation activity, but is required for full kinase activity.

The protein resides in the cell membrane. It catalyses the reaction L-seryl-[protein] + ATP = O-phospho-L-seryl-[protein] + ADP + H(+). The catalysed reaction is L-threonyl-[protein] + ATP = O-phospho-L-threonyl-[protein] + ADP + H(+). Its function is as follows. Phosphorylates the DNA-binding protein MT2231. May be involved in the regulation of cell division and cell envelope biosynthesis. The polypeptide is Serine/threonine-protein kinase PknL (pknL) (Mycobacterium tuberculosis (strain CDC 1551 / Oshkosh)).